A 31-amino-acid polypeptide reads, in one-letter code: Cycloviolacin-O14 (31 aa).

A cross-link (cyclopeptide (Gly-Asn)) is located at residues 1–31; the sequence is GSIPACGESCFKGKCYTPGCSCSKYPLCAKN. Disulfide bonds link Cys6-Cys20, Cys10-Cys22, and Cys15-Cys28.

This is a cyclic peptide. Expressed in leaves and petioles but not in petals, roots and runners (at protein level).

In terms of biological role, probably participates in a plant defense mechanism. Has hemolytic activity. This chain is Cycloviolacin-O14, found in Viola odorata (Sweet violet).